The sequence spans 169 residues: Large ribosomal subunit protein uL10 (169 aa).

This sequence belongs to the universal ribosomal protein uL10 family. In terms of assembly, part of the ribosomal stalk of the 50S ribosomal subunit. The N-terminus interacts with L11 and the large rRNA to form the base of the stalk. The C-terminus forms an elongated spine to which L12 dimers bind in a sequential fashion forming a multimeric L10(L12)X complex.

In terms of biological role, forms part of the ribosomal stalk, playing a central role in the interaction of the ribosome with GTP-bound translation factors. This is Large ribosomal subunit protein uL10 from Staphylococcus saprophyticus subsp. saprophyticus (strain ATCC 15305 / DSM 20229 / NCIMB 8711 / NCTC 7292 / S-41).